The following is a 211-amino-acid chain: Uracil phosphoribosyltransferase (211 aa).

5-phospho-alpha-D-ribose 1-diphosphate contacts are provided by residues R79, R104, and 131 to 139 (DPMLATGGS). Uracil contacts are provided by residues I196 and 201–203 (GDA). D202 provides a ligand contact to 5-phospho-alpha-D-ribose 1-diphosphate.

It belongs to the UPRTase family. It depends on Mg(2+) as a cofactor.

It carries out the reaction UMP + diphosphate = 5-phospho-alpha-D-ribose 1-diphosphate + uracil. The protein operates within pyrimidine metabolism; UMP biosynthesis via salvage pathway; UMP from uracil: step 1/1. With respect to regulation, allosterically activated by GTP. Its function is as follows. Catalyzes the conversion of uracil and 5-phospho-alpha-D-ribose 1-diphosphate (PRPP) to UMP and diphosphate. The sequence is that of Uracil phosphoribosyltransferase from Lactococcus lactis subsp. cremoris (strain MG1363).